The following is a 308-amino-acid chain: Mitochondrial import receptor subunit TOM40B (308 aa).

Residues 1–29 (MGNTLGLAPMGALPRRSPRREEPLPNPGS) form a disordered region. The required for mitochondrial targeting stretch occupies residues 281 to 308 (PLPVTLALGAFLNHWRNRFHCGFSITVG).

Belongs to the Tom40 family. As to quaternary structure, forms part of the preprotein translocase of the outer mitochondrial membrane (TOM complex) containing TOMM22, TOMM40, TOMM40L and TOMM70. Interacts with mitochondrial targeting sequences.

Its subcellular location is the mitochondrion outer membrane. In terms of biological role, potential channel-forming protein implicated in import of protein precursors into mitochondria. This is Mitochondrial import receptor subunit TOM40B from Bos taurus (Bovine).